Here is a 160-residue protein sequence, read N- to C-terminus: Transcription elongation factor GreA (160 aa).

Residues Val-14–Ser-76 are a coiled coil.

The protein belongs to the GreA/GreB family.

Its function is as follows. Necessary for efficient RNA polymerase transcription elongation past template-encoded arresting sites. The arresting sites in DNA have the property of trapping a certain fraction of elongating RNA polymerases that pass through, resulting in locked ternary complexes. Cleavage of the nascent transcript by cleavage factors such as GreA or GreB allows the resumption of elongation from the new 3'terminus. GreA releases sequences of 2 to 3 nucleotides. This chain is Transcription elongation factor GreA, found in Clostridium botulinum (strain Okra / Type B1).